A 215-amino-acid polypeptide reads, in one-letter code: Adenylate kinase (215 aa).

10-15 (GAGKGT) lines the ATP pocket. Residues 30-59 (STGDMLRAAIKAQTPMGKMAKEFMDAGKLV) are NMP. AMP-binding positions include Thr31, Arg36, 57-59 (KLV), 85-88 (GFPR), and Gln92. The interval 122–159 (GRRVHPASGRTYHITYNPPKVDDKDNETGDDLIQREDD) is LID. Residues Arg123 and 132–133 (TY) each bind ATP. The AMP site is built by Arg156 and Arg167. Residue Gln201 coordinates ATP.

Belongs to the adenylate kinase family. In terms of assembly, monomer.

It localises to the cytoplasm. It carries out the reaction AMP + ATP = 2 ADP. The protein operates within purine metabolism; AMP biosynthesis via salvage pathway; AMP from ADP: step 1/1. Its function is as follows. Catalyzes the reversible transfer of the terminal phosphate group between ATP and AMP. Plays an important role in cellular energy homeostasis and in adenine nucleotide metabolism. In Hydrogenovibrio crunogenus (strain DSM 25203 / XCL-2) (Thiomicrospira crunogena), this protein is Adenylate kinase.